A 307-amino-acid polypeptide reads, in one-letter code: Probable deoxyhypusine synthase (307 aa).

The active-site Nucleophile is the Lys278.

This sequence belongs to the deoxyhypusine synthase family. NAD(+) serves as cofactor.

It carries out the reaction [eIF5A protein]-L-lysine + spermidine = [eIF5A protein]-deoxyhypusine + propane-1,3-diamine. It participates in protein modification; eIF5A hypusination. Functionally, catalyzes the NAD-dependent oxidative cleavage of spermidine and the subsequent transfer of the butylamine moiety of spermidine to the epsilon-amino group of a specific lysine residue of the eIF-5A precursor protein to form the intermediate deoxyhypusine residue. This chain is Probable deoxyhypusine synthase (dys), found in Methanothermobacter thermautotrophicus (strain ATCC 29096 / DSM 1053 / JCM 10044 / NBRC 100330 / Delta H) (Methanobacterium thermoautotrophicum).